Here is a 318-residue protein sequence, read N- to C-terminus: Thymidylate synthase (318 aa).

DUMP is bound by residues arginine 25 and 180–181; that span reads RR. The Nucleophile role is filled by cysteine 200. DUMP-binding positions include 220–223, asparagine 231, and 261–263; these read RSGD and HIY. Residue aspartate 223 participates in (6R)-5,10-methylene-5,6,7,8-tetrahydrofolate binding. Residue alanine 317 coordinates (6R)-5,10-methylene-5,6,7,8-tetrahydrofolate.

It belongs to the thymidylate synthase family. Bacterial-type ThyA subfamily. In terms of assembly, homodimer.

It is found in the cytoplasm. It carries out the reaction dUMP + (6R)-5,10-methylene-5,6,7,8-tetrahydrofolate = 7,8-dihydrofolate + dTMP. It functions in the pathway pyrimidine metabolism; dTTP biosynthesis. In terms of biological role, catalyzes the reductive methylation of 2'-deoxyuridine-5'-monophosphate (dUMP) to 2'-deoxythymidine-5'-monophosphate (dTMP) while utilizing 5,10-methylenetetrahydrofolate (mTHF) as the methyl donor and reductant in the reaction, yielding dihydrofolate (DHF) as a by-product. This enzymatic reaction provides an intracellular de novo source of dTMP, an essential precursor for DNA biosynthesis. This is Thymidylate synthase from Lactobacillus helveticus (strain DPC 4571).